Reading from the N-terminus, the 124-residue chain is Histone H2A, embryonic (124 aa).

Residues 1–18 (MSGRGKSGKARTKAKTRS) are compositionally biased toward basic residues. Residues 1–21 (MSGRGKSGKARTKAKTRSSRA) form a disordered region. Residue Ser-2 is modified to N-acetylserine. The residue at position 2 (Ser-2) is a Phosphoserine. Gln-104 carries the N5-methylglutamine modification. Lys-119 is covalently cross-linked (Glycyl lysine isopeptide (Lys-Gly) (interchain with G-Cter in ubiquitin)).

Belongs to the histone H2A family. The nucleosome is a histone octamer containing two molecules each of H2A, H2B, H3 and H4 assembled in one H3-H4 heterotetramer and two H2A-H2B heterodimers. The octamer wraps approximately 147 bp of DNA. Monoubiquitination of Lys-119 gives a specific tag for epigenetic transcriptional repression. In terms of processing, phosphorylation of Ser-2 directly represses transcription.

The protein resides in the nucleus. Its subcellular location is the chromosome. In terms of biological role, core component of nucleosome. Nucleosomes wrap and compact DNA into chromatin, limiting DNA accessibility to the cellular machineries which require DNA as a template. Histones thereby play a central role in transcription regulation, DNA repair, DNA replication and chromosomal stability. DNA accessibility is regulated via a complex set of post-translational modifications of histones, also called histone code, and nucleosome remodeling. This Psammechinus miliaris (Green sea urchin) protein is Histone H2A, embryonic.